The primary structure comprises 1332 residues: Misshapen-like kinase 1 (1332 aa).

One can recognise a Protein kinase domain in the interval 25–289 (FELVEVVGNG…TEQLLKFPFI (265 aa)). ATP is bound by residues 31–39 (VGNGTYGQV) and lysine 54. The active-site Proton acceptor is aspartate 153. Disordered regions lie at residues 300 to 347 (IQLK…NVPG), 363 to 383 (KSNS…QRDP), and 395 to 887 (QRRI…GTMV). Positions 317-333 (EETEYEYSGSEEEDDSH) are enriched in acidic residues. Serine 324 and serine 326 each carry phosphoserine. Over residues 371–380 (QQQQLQQQQQ) the composition is skewed to low complexity. The segment covering 396-466 (RRIEEQKEER…EEQRQSERLQ (71 aa)) has biased composition (basic and acidic residues). Low complexity predominate over residues 479–497 (LQQQQQQQQLQKQQQQQLL). 2 positions are modified to omega-N-methylarginine: arginine 501 and arginine 509. The segment covering 518–528 (AWAREVEERTR) has biased composition (basic and acidic residues). Residues 547–561 (PEPPIPQASPGPPGP) show a composition bias toward pro residues. Positions 598–608 (RSQSLQDQPTR) are enriched in polar residues. Residue serine 641 is modified to Phosphoserine. Residues 670 to 682 (QRTSSIATALNTS) are compositionally biased toward polar residues. Residue serine 701 is modified to Phosphoserine. Positions 716 to 729 (PKPPGPPAQPPGPP) are enriched in pro residues. Basic and acidic residues predominate over residues 736-748 (DLRRSDPGWERSD). A phosphoserine mark is found at serine 754, serine 763, serine 777, serine 778, and serine 782. Residues 804–821 (LLKERTLDEAPRPPKKAM) show a composition bias toward basic and acidic residues. The segment covering 828–841 (EEVESSEDDEEEGE) has biased composition (acidic residues). Positions 866–1332 (MVVHDVEEIT…TLNRNCIMNW (467 aa)) are mediates interaction with RAP2A. Phosphothreonine is present on threonine 891. The interval 902-943 (DSNGYTNLPDVVQPSHSPTENSKGQSPPSKDGSGDYQSRGLV) is disordered. Residues 915–929 (PSHSPTENSKGQSPP) show a composition bias toward polar residues. Residues 1019-1306 (NSEILCAALW…KFLCERNDKV (288 aa)) form the CNH domain.

It belongs to the protein kinase superfamily. STE Ser/Thr protein kinase family. STE20 subfamily. In terms of assembly, interacts with TANC1. Interacts with RAP2A. Isoform 4 interacts with NCK1. It depends on Mg(2+) as a cofactor. Autophosphorylated. In terms of tissue distribution, expressed in the brain, isoform 2 is more abundant than isoform 1. Isoform 3 is ubiquitously expressed. Isoform 1 is most abundant in the skeletal muscle. Isoform 4 is ubiquitously expressed with relative high levels in brain, skeletal muscle, pancreas and testis.

The protein localises to the cytoplasm. It is found in the postsynaptic density. Its subcellular location is the cell projection. The protein resides in the axon. It localises to the dendrite. The protein localises to the golgi apparatus. It catalyses the reaction L-seryl-[protein] + ATP = O-phospho-L-seryl-[protein] + ADP + H(+). The enzyme catalyses L-threonyl-[protein] + ATP = O-phospho-L-threonyl-[protein] + ADP + H(+). Functionally, serine/threonine kinase which acts as a negative regulator of Ras-related Rap2-mediated signal transduction to control neuronal structure and AMPA receptor trafficking. Required for normal synaptic density, dendrite complexity, as well as surface AMPA receptor expression in hippocampal neurons. Can activate the JNK and MAPK14/p38 pathways and mediates stimulation of the stress-activated protein kinase MAPK14/p38 MAPK downstream of the Raf/ERK pathway. Phosphorylates TANC1 upon stimulation by RAP2A, MBP and SMAD1. Has an essential function in negative selection of thymocytes, perhaps by coupling NCK1 to activation of JNK1. Activator of the Hippo signaling pathway which plays a pivotal role in organ size control and tumor suppression by restricting proliferation and promoting apoptosis. MAP4Ks act in parallel to and are partially redundant with STK3/MST2 and STK4/MST2 in the phosphorylation and activation of LATS1/2, and establish MAP4Ks as components of the expanded Hippo pathway. Isoform 4 can activate the JNK pathway. Involved in the regulation of actin cytoskeleton reorganization, cell-matrix adhesion, cell-cell adhesion and cell migration. This Homo sapiens (Human) protein is Misshapen-like kinase 1.